Consider the following 58-residue polypeptide: Large ribosomal subunit protein bL32 (58 aa).

2 disordered regions span residues 1 to 22 and 39 to 58; these read MAVP…HWKR and LSGR…DDEE.

This sequence belongs to the bacterial ribosomal protein bL32 family.

In Crocosphaera subtropica (strain ATCC 51142 / BH68) (Cyanothece sp. (strain ATCC 51142)), this protein is Large ribosomal subunit protein bL32.